Here is a 205-residue protein sequence, read N- to C-terminus: Protein N-terminal glutamine amidohydrolase (205 aa).

Residues Cys-20, His-74, and Asp-90 contribute to the active site.

This sequence belongs to the NTAQ1 family. As to quaternary structure, monomer.

It catalyses the reaction N-terminal L-glutaminyl-[protein] + H2O = N-terminal L-glutamyl-[protein] + NH4(+). Functionally, mediates the side-chain deamidation of N-terminal glutamine residues to glutamate, an important step in N-end rule pathway of protein degradation. Conversion of the resulting N-terminal glutamine to glutamate renders the protein susceptible to arginylation, polyubiquitination and degradation as specified by the N-end rule. Does not act on substrates with internal or C-terminal glutamine and does not act on non-glutamine residues in any position. The polypeptide is Protein N-terminal glutamine amidohydrolase (tun) (Drosophila mojavensis (Fruit fly)).